Consider the following 57-residue polypeptide: Ribulose bisphosphate carboxylase large chain (57 aa).

The propeptide occupies 1 to 2 (MS). At Pro3 the chain carries N-acetylproline. An N6,N6,N6-trimethyllysine modification is found at Lys14.

Belongs to the RuBisCO large chain family. Type I subfamily. As to quaternary structure, heterohexadecamer of 8 large chains and 8 small chains.

The protein localises to the plastid. It is found in the chloroplast. It catalyses the reaction 2 (2R)-3-phosphoglycerate + 2 H(+) = D-ribulose 1,5-bisphosphate + CO2 + H2O. The catalysed reaction is D-ribulose 1,5-bisphosphate + O2 = 2-phosphoglycolate + (2R)-3-phosphoglycerate + 2 H(+). In terms of biological role, ruBisCO catalyzes two reactions: the carboxylation of D-ribulose 1,5-bisphosphate, the primary event in carbon dioxide fixation, as well as the oxidative fragmentation of the pentose substrate in the photorespiration process. Both reactions occur simultaneously and in competition at the same active site. The chain is Ribulose bisphosphate carboxylase large chain (rbcL) from Buxus sempervirens (Common box).